A 696-amino-acid polypeptide reads, in one-letter code: Probable transporter efuK (696 aa).

The disordered stretch occupies residues 603–642 (SLNGGKMQGASDAKSKVEQGQRAMRKQDEQNGSKWEPVFF). Basic and acidic residues predominate over residues 615 to 633 (AKSKVEQGQRAMRKQDEQN).

The protein belongs to the OSBP family.

Its function is as follows. Probable transporter; part of the gene cluster that mediates the biosynthesis of enfumafungin, a glycosylated fernene-type triterpenoid with potent antifungal activity, mediated by its interaction with beta-1,3-glucan synthase and the fungal cell wall. Might be involved in transport of enfumafungin to and across organelle membranes. In Hormonema carpetanum, this protein is Probable transporter efuK.